We begin with the raw amino-acid sequence, 198 residues long: Recombination protein RecR (198 aa).

Residues cysteine 57–cysteine 72 form a C4-type zinc finger. Residues serine 80–proline 175 enclose the Toprim domain.

Belongs to the RecR family.

May play a role in DNA repair. It seems to be involved in an RecBC-independent recombinational process of DNA repair. It may act with RecF and RecO. The protein is Recombination protein RecR of Brevibacillus brevis (strain 47 / JCM 6285 / NBRC 100599).